The chain runs to 620 residues: Translation initiation factor IF-2 (620 aa).

A tr-type G domain is found at 119-288; the sequence is ERPPIVTIMG…IILISELENL (170 aa). A G1 region spans residues 128 to 135; that stretch reads GHVDHGKT. GTP is bound at residue 128-135; that stretch reads GHVDHGKT. The segment at 153–157 is G2; the sequence is GITQA. Positions 175–178 are G3; it reads DTPG. GTP-binding positions include 175-179 and 229-232; these read DTPGH and NKID. The interval 229–232 is G4; that stretch reads NKID. Positions 265–267 are G5; it reads SAI.

Belongs to the TRAFAC class translation factor GTPase superfamily. Classic translation factor GTPase family. IF-2 subfamily.

It localises to the cytoplasm. Its function is as follows. One of the essential components for the initiation of protein synthesis. Protects formylmethionyl-tRNA from spontaneous hydrolysis and promotes its binding to the 30S ribosomal subunits. Also involved in the hydrolysis of GTP during the formation of the 70S ribosomal complex. The protein is Translation initiation factor IF-2 of Mycoplasma mycoides subsp. mycoides SC (strain CCUG 32753 / NCTC 10114 / PG1).